Consider the following 549-residue polypeptide: Glucose-6-phosphate isomerase (549 aa).

The Proton donor role is filled by glutamate 353. Residues histidine 384 and lysine 513 contribute to the active site.

The protein belongs to the GPI family.

It localises to the cytoplasm. The enzyme catalyses alpha-D-glucose 6-phosphate = beta-D-fructose 6-phosphate. The protein operates within carbohydrate biosynthesis; gluconeogenesis. It functions in the pathway carbohydrate degradation; glycolysis; D-glyceraldehyde 3-phosphate and glycerone phosphate from D-glucose: step 2/4. Functionally, catalyzes the reversible isomerization of glucose-6-phosphate to fructose-6-phosphate. The polypeptide is Glucose-6-phosphate isomerase (Bartonella bacilliformis (strain ATCC 35685 / KC583 / Herrer 020/F12,63)).